The primary structure comprises 106 residues: Adipokinetic hormone/corazonin-related peptide (106 aa).

The first 25 residues, 1-25, serve as a signal peptide directing secretion; sequence MRNSIYKLIMFAVLCMVLTSSLSYA. Glutamine 26 is modified (pyrrolidone carboxylic acid). Alanine 35 carries the post-translational modification Alanine amide. A propeptide spanning residues 39 to 106 is cleaved from the precursor; that stretch reads SLAEAAQSTG…GLPLFSNGHL (68 aa).

This sequence belongs to the AKH/HRTH/RPCH family. In terms of tissue distribution, only expressed in the head and thorax body segments of adults. Is more expressed in adult males than in females.

It localises to the secreted. Functionally, neuropeptide with neuromodulator or neurotransmitter role that activates the adipokinetic hormone/corazonin-related peptide receptor (ACPR). May function in regulation of post-ecdysis activities. Does not activate the A.gambiae adipokinetic hormone (AKH) and corazonin (CRZ) receptors. The polypeptide is Adipokinetic hormone/corazonin-related peptide (Aedes aegypti (Yellowfever mosquito)).